Here is a 444-residue protein sequence, read N- to C-terminus: tRNA modification GTPase MnmE (444 aa).

Positions 23, 82, and 121 each coordinate (6S)-5-formyl-5,6,7,8-tetrahydrofolate. A TrmE-type G domain is found at G216 to N365. Position 226 (N226) interacts with K(+). Residues N226 to S231, T245 to T251, and D270 to G273 each bind GTP. S230 contributes to the Mg(2+) binding site. The K(+) site is built by T245, I247, and T250. T251 contributes to the Mg(2+) binding site. K444 provides a ligand contact to (6S)-5-formyl-5,6,7,8-tetrahydrofolate.

Belongs to the TRAFAC class TrmE-Era-EngA-EngB-Septin-like GTPase superfamily. TrmE GTPase family. In terms of assembly, homodimer. Heterotetramer of two MnmE and two MnmG subunits. K(+) is required as a cofactor.

The protein resides in the cytoplasm. Its function is as follows. Exhibits a very high intrinsic GTPase hydrolysis rate. Involved in the addition of a carboxymethylaminomethyl (cmnm) group at the wobble position (U34) of certain tRNAs, forming tRNA-cmnm(5)s(2)U34. The polypeptide is tRNA modification GTPase MnmE (Chlamydia trachomatis serovar L2 (strain ATCC VR-902B / DSM 19102 / 434/Bu)).